The sequence spans 460 residues: Ammonium transporter Rh type B-A (460 aa).

Residues 1-10 (MTGYSTNMRI) lie on the Cytoplasmic side of the membrane. A helical membrane pass occupies residues 11-31 (KLPLFCLILQFITIILFAVFV). Topologically, residues 32 to 62 (RYDHESDARGWHDELKNHSTANADNDFYFRY) are extracellular. N-linked (GlcNAc...) asparagine glycosylation occurs at Asn48. A helical membrane pass occupies residues 63–83 (PSFQDVHVMIFIGFGFLMTFL). Over 84 to 87 (KRYG) the chain is Cytoplasmic. Residues 88-108 (FSSVAFNFLIAAFGLQWSTLI) traverse the membrane as a helical segment. The Extracellular segment spans residues 109–125 (QGFFHGFHDGKIHVGIE). A helical transmembrane segment spans residues 126–146 (SMINADFCTGAVLISFGAVLG). Residues 147–150 (KTSP) are Cytoplasmic-facing. The helical transmembrane segment at 151–171 (VQLIVMTLIEVTLFGINEYII) threads the bilayer. Residues 172–179 (LNIVGAKD) lie on the Extracellular side of the membrane. Residues 180-202 (AGGSMTIHTFGAYFGLIVSRVLY) form a helical membrane-spanning segment. Residues 203 to 220 (RADLDKSRQREGSVYHSD) lie on the Cytoplasmic side of the membrane. Residues 221-241 (LFAMIGTIYLWMFWPSFNSAV) traverse the membrane as a helical segment. Residues 242 to 252 (TAHGDDQHRTV) are Extracellular-facing. Residues 253–273 (LNTYYSLAACTLATFGFSALL) form a helical membrane-spanning segment. Residues 274-283 (NGEGKLDMVH) lie on the Cytoplasmic side of the membrane. A helical membrane pass occupies residues 284-304 (IQNAALAGGVAVGTSGEMMLT). Position 305 (Pro305) is a topological domain, extracellular. Residues 306 to 326 (FGAMIAGTLAGIVSVLGYKYL) form a helical membrane-spanning segment. The Cytoplasmic portion of the chain corresponds to 327 to 347 (TPVLDSKLKIQDTCGVHNLHG). Residues 348 to 368 (MPGILGAVIGAIVALFATADI) form a helical membrane-spanning segment. At 369 to 394 (YGDGMDDVFPMIFDGSRTAKQQSLYQ) the chain is on the extracellular side. A helical membrane pass occupies residues 395 to 415 (FLALLVALGFAIVGGTVVGFI). Residues 416–460 (LKLPLFGTPSDAECFEDAVYWEVPGGEGHQQLTVVVNNEDPDTQA) are Cytoplasmic-facing.

It belongs to the ammonium transporter (TC 2.A.49) family. Rh subfamily.

It localises to the basolateral cell membrane. The protein resides in the cytoplasmic vesicle membrane. Functionally, functions as a specific ammonium transporter. The sequence is that of Ammonium transporter Rh type B-A (rhbg-a) from Xenopus laevis (African clawed frog).